A 121-amino-acid polypeptide reads, in one-letter code: Large ribosomal subunit protein uL24 (121 aa).

It belongs to the universal ribosomal protein uL24 family. Part of the 50S ribosomal subunit.

In terms of biological role, one of two assembly initiator proteins, it binds directly to the 5'-end of the 23S rRNA, where it nucleates assembly of the 50S subunit. Its function is as follows. Located at the polypeptide exit tunnel on the outside of the subunit. The sequence is that of Large ribosomal subunit protein uL24 from Pyrococcus horikoshii (strain ATCC 700860 / DSM 12428 / JCM 9974 / NBRC 100139 / OT-3).